The sequence spans 257 residues: MADS-box transcription factor 1 (257 aa).

In terms of domain architecture, MADS-box spans 1–61; it reads MGRGKVELKR…GRLFEFSSSS (61 aa). The K-box domain maps to 85 to 175; the sequence is NEINYQEYLK…RKKLQETSAE (91 aa).

In terms of assembly, may interact with the K-box of MADS6, MADS14 and MADS15.

It localises to the nucleus. Its function is as follows. Probable transcription factor involved in the development of floral organs. Required for the formation of inner floral organs (lodicules, stamens and carpels, or whorls 2, 3 and 4) and the lemma and palea (whorl 1), which are grass floral organs analogous to sepals. May be involved in the control of flowering time. Seems to act as transcriptional activator. May act upstream of the auxin-responsive protein GH3.8. The protein is MADS-box transcription factor 1 (MADS1) of Oryza sativa subsp. indica (Rice).